The primary structure comprises 565 residues: MSQEFDYIIVGAGSAGNTLATRLTEDAGVTVLLLEAGGPDYRFDFRTQMPAALAFPLQGRRYNWAYETDPEPHMDGRRMECGRGKGLGGSSLINGMCYIRGNAMDFDGWAELPGLQDWTYLDCLPYFRKAETRDIGPNDYHGGEGPVSVATPKAGNNPLFHAMVEAGVQAGYPRTEDLNGYQQEGFGPMDRSVTKNGRRSSTARGYLDQAKKRPNLTIVTHALSDRVLFDGKRAVGVTYLVGDSEERVEARARKEVIVSSGAIASPQLLQRSGVGPRALLESLDIPVVHDLPGVGENLQDHLELYLQYACTQPVSLYPSLLWWNQPAIGAEWMFKGTGIGASNQFEAGGFIRTRPEFKWPNIQYHFLPVAINYNGSNGVKEHGFQAHMGSMRSPARGRIQAKSKDPRQHPSILFNYMSTEQDWQEFRDGIRLTREIMAQPALDPYRGREISPGADVQTDEQLDKFIREHAETAFHPSCSCKMGTDDMAVVDGEGRVHGMKGLRVVDASIMPLIITGNLNATTIMIAEKISDKIRGRKPLPRSTAKYYVAGDAPVKGKPMREVKQA.

6–35 lines the FAD pocket; the sequence is DYIIVGAGSAGNTLATRLTEDAGVTVLLLE. The Proton acceptor role is filled by histidine 475.

It belongs to the GMC oxidoreductase family. FAD serves as cofactor.

The enzyme catalyses choline + A = betaine aldehyde + AH2. The catalysed reaction is betaine aldehyde + NAD(+) + H2O = glycine betaine + NADH + 2 H(+). It functions in the pathway amine and polyamine biosynthesis; betaine biosynthesis via choline pathway; betaine aldehyde from choline (cytochrome c reductase route): step 1/1. In terms of biological role, involved in the biosynthesis of the osmoprotectant glycine betaine. Catalyzes the oxidation of choline to betaine aldehyde and betaine aldehyde to glycine betaine at the same rate. This Pseudomonas putida (strain GB-1) protein is Oxygen-dependent choline dehydrogenase.